The sequence spans 313 residues: Biotin synthase (313 aa).

A Radical SAM core domain is found at 38–262 (REVQISTLLS…TMPHARVRLS (225 aa)). [4Fe-4S] cluster contacts are provided by Cys53, Cys57, and Cys60. The [2Fe-2S] cluster site is built by Cys97, Cys128, Cys188, and Arg260.

Belongs to the radical SAM superfamily. Biotin synthase family. In terms of assembly, homodimer. [4Fe-4S] cluster is required as a cofactor. [2Fe-2S] cluster serves as cofactor.

It catalyses the reaction (4R,5S)-dethiobiotin + (sulfur carrier)-SH + 2 reduced [2Fe-2S]-[ferredoxin] + 2 S-adenosyl-L-methionine = (sulfur carrier)-H + biotin + 2 5'-deoxyadenosine + 2 L-methionine + 2 oxidized [2Fe-2S]-[ferredoxin]. Its pathway is cofactor biosynthesis; biotin biosynthesis; biotin from 7,8-diaminononanoate: step 2/2. Its function is as follows. Catalyzes the conversion of dethiobiotin (DTB) to biotin by the insertion of a sulfur atom into dethiobiotin via a radical-based mechanism. In Granulibacter bethesdensis (strain ATCC BAA-1260 / CGDNIH1), this protein is Biotin synthase.